The sequence spans 2311 residues: C2 domain-containing protein 3 (2311 aa).

Disordered stretches follow at residues 447 to 511 (SDSS…TSRC) and 543 to 562 (GTAV…RPVR). Residues 470-509 (IALDRGRHRDNSPSEYKEDAKQTKGNDSLRDSKTSEKSTS) are compositionally biased toward basic and acidic residues. C2 domains are found at residues 508 to 666 (TSRC…SVTC), 751 to 888 (GNGG…TRLL), 952 to 1112 (LDPP…HRED), 1136 to 1303 (PSGL…SGWY), 1370 to 1505 (HKRE…TLAV), and 1581 to 1713 (KTEV…CGWY). Positions 939–964 (GTSQTAMPRPAHFLDPPLSSSQMGRP) are disordered. Disordered stretches follow at residues 1536 to 1589 (PSNS…LLDA), 1955 to 1977 (SEAY…GSLN), 2036 to 2065 (MTDR…PVNP), 2084 to 2233 (NDPS…SNLL), and 2261 to 2292 (VREG…PKEE). 2 stretches are compositionally biased toward basic and acidic residues: residues 1565-1589 (FEEK…LLDA) and 1955-1964 (SEAYEREGQR). Positions 2036–2047 (MTDRTSPWSSIL) are enriched in polar residues. Residues 2048-2059 (SERDSDSMDHPQ) show a composition bias toward basic and acidic residues. Residues 2084–2095 (NDPSSVLSSARS) show a composition bias toward polar residues. The segment covering 2138 to 2151 (AESEAESQEMDGDP) has biased composition (acidic residues). Polar residues predominate over residues 2221–2233 (GSESPQVPPSNLL).

The protein resides in the cytoplasm. The protein localises to the cytoskeleton. It localises to the cilium basal body. Its subcellular location is the microtubule organizing center. It is found in the centrosome. The protein resides in the centriole. In terms of biological role, component of the centrioles that acts as a positive regulator of centriole elongation. Promotes assembly of centriolar distal appendage, a structure at the distal end of the mother centriole that acts as an anchor of the cilium. Required for primary cilium formation. The sequence is that of C2 domain-containing protein 3 (c2cd3) from Xenopus tropicalis (Western clawed frog).